A 491-amino-acid chain; its full sequence is Cytochrome P450 2H1 (491 aa).

C436 is a binding site for heme.

This sequence belongs to the cytochrome P450 family. Heme is required as a cofactor. In terms of tissue distribution, expressed in liver.

The protein resides in the endoplasmic reticulum membrane. It is found in the microsome membrane. It catalyses the reaction an organic molecule + reduced [NADPH--hemoprotein reductase] + O2 = an alcohol + oxidized [NADPH--hemoprotein reductase] + H2O + H(+). Its function is as follows. Cytochromes P450 are a group of heme-thiolate monooxygenases. In liver microsomes, this enzyme is involved in an NADPH-dependent electron transport pathway. It oxidizes a variety of structurally unrelated compounds, including steroids, fatty acids, and xenobiotics. This is Cytochrome P450 2H1 (CYP2H1) from Gallus gallus (Chicken).